Consider the following 165-residue polypeptide: Phosphopantetheine adenylyltransferase (165 aa).

Serine 10 provides a ligand contact to substrate. ATP-binding positions include 10–11 (SF) and histidine 18. Positions 42, 79, and 93 each coordinate substrate. ATP-binding positions include 94 to 96 (GLR), glutamate 104, and 129 to 135 (VRPITAT).

The protein belongs to the bacterial CoaD family. Homohexamer. The cofactor is Mg(2+).

It is found in the cytoplasm. The enzyme catalyses (R)-4'-phosphopantetheine + ATP + H(+) = 3'-dephospho-CoA + diphosphate. It participates in cofactor biosynthesis; coenzyme A biosynthesis; CoA from (R)-pantothenate: step 4/5. Functionally, reversibly transfers an adenylyl group from ATP to 4'-phosphopantetheine, yielding dephospho-CoA (dPCoA) and pyrophosphate. In Rhodopseudomonas palustris (strain HaA2), this protein is Phosphopantetheine adenylyltransferase.